A 486-amino-acid chain; its full sequence is Ribulose bisphosphate carboxylase large chain (486 aa).

Substrate contacts are provided by Asn126 and Thr176. Lys178 functions as the Proton acceptor in the catalytic mechanism. Lys180 contacts substrate. Residues Lys204, Asp206, and Glu207 each contribute to the Mg(2+) site. Lys204 carries the N6-carboxylysine modification. His296 serves as the catalytic Proton acceptor. Residues Arg297, His329, and Ser381 each coordinate substrate.

The protein belongs to the RuBisCO large chain family. Type I subfamily. In terms of assembly, heterohexadecamer of 8 large chains and 8 small chains. Mg(2+) is required as a cofactor.

The enzyme catalyses 2 (2R)-3-phosphoglycerate + 2 H(+) = D-ribulose 1,5-bisphosphate + CO2 + H2O. It catalyses the reaction D-ribulose 1,5-bisphosphate + O2 = 2-phosphoglycolate + (2R)-3-phosphoglycerate + 2 H(+). Its function is as follows. RuBisCO catalyzes two reactions: the carboxylation of D-ribulose 1,5-bisphosphate, the primary event in carbon dioxide fixation, as well as the oxidative fragmentation of the pentose substrate. Both reactions occur simultaneously and in competition at the same active site. The polypeptide is Ribulose bisphosphate carboxylase large chain (Sinorhizobium medicae (strain WSM419) (Ensifer medicae)).